The sequence spans 317 residues: Small ribosomal subunit protein RACK1 (317 aa).

WD repeat units lie at residues 13–44 (GHSG…IMWK), 61–91 (GHSH…RLWD), 103–133 (GHTK…KLWN), 146–178 (GHTE…KVWN), 190–220 (GHTG…MLWD), 231–260 (DSGD…KIWD), and 281–311 (AEPP…RVWQ).

It belongs to the WD repeat G protein beta family. Ribosomal protein RACK1 subfamily.

It localises to the cytoplasm. In terms of biological role, involved in the recruitment, assembly and/or regulation of a variety of signaling molecules. Interacts with a wide variety of proteins and plays a role in many cellular processes. Required for VANGL2 membrane localization, inhibits Wnt signaling and regulates cellular polarization and oriented cell division during gastrulation. The sequence is that of Small ribosomal subunit protein RACK1 (gnb2l1) from Oreochromis niloticus (Nile tilapia).